Reading from the N-terminus, the 378-residue chain is Protein SLG1 (378 aa).

The N-terminal stretch at 1 to 21 is a signal peptide; it reads MRPNKTSLLLALLSILSQANA. The WSC domain occupies 22–110; it reads YEYVNCFSSL…EDAYSVYQLD (89 aa). Over 22–264 the chain is Extracellular; sequence YEYVNCFSSL…THKKKANVGA (243 aa). A glycan (N-linked (GlcNAc...) asparagine) is linked at Asn65. Disordered regions lie at residues 115-201 and 236-256; these read SNSI…TSST and QNSG…SKTH. The segment covering 236 to 253 has biased composition (low complexity); sequence QNSGSATGTAGSDSTSGS. Residues 265-285 traverse the membrane as a helical segment; it reads IVGGVVGGVVGAVAIALCILL. The Cytoplasmic portion of the chain corresponds to 286 to 378; sequence IVRHINMKRE…LTVVNPDEAD (93 aa). A disordered region spans residues 318–378; the sequence is ASSFSSNHGP…LTVVNPDEAD (61 aa). Positions 319-331 are enriched in low complexity; that stretch reads SSFSSNHGPSSGS. 2 positions are modified to phosphoserine: Ser331 and Ser353.

Post-translationally, glycosylated. Phosphorylated. Phosphorylation serves a negative regulatory role.

It is found in the cell membrane. Its function is as follows. Plays a role during G1 to regulate entering or exiting the cell cycle. Involved in stress responses. Has a role in cell wall integrity signaling. Activates ROM1 or ROM2 catalyzed guanine nucleotide exchange toward RHO1. Important regulator of the actin cytoskeleton rearrangements in conditions of cell wall expansion and membrane stretching. Specifically required for the actin reorganization induced by hypo-osmotic shock. Multicopy suppressor of 1,3-beta-glucan synthase (GS). Activates GS upstream of RHO1. Acts positively on the PKC1-MAPK pathway. Activates transiently SLT2 during alkaline stress, which leads to an increase in the expression of several specific genes. The sequence is that of Protein SLG1 (SLG1) from Saccharomyces cerevisiae (strain ATCC 204508 / S288c) (Baker's yeast).